We begin with the raw amino-acid sequence, 311 residues long: Methionyl-tRNA formyltransferase (311 aa).

110–113 (SLLP) lines the (6S)-5,6,7,8-tetrahydrofolate pocket.

This sequence belongs to the Fmt family.

The catalysed reaction is L-methionyl-tRNA(fMet) + (6R)-10-formyltetrahydrofolate = N-formyl-L-methionyl-tRNA(fMet) + (6S)-5,6,7,8-tetrahydrofolate + H(+). Its function is as follows. Attaches a formyl group to the free amino group of methionyl-tRNA(fMet). The formyl group appears to play a dual role in the initiator identity of N-formylmethionyl-tRNA by promoting its recognition by IF2 and preventing the misappropriation of this tRNA by the elongation apparatus. This chain is Methionyl-tRNA formyltransferase, found in Streptococcus pyogenes serotype M28 (strain MGAS6180).